A 424-amino-acid polypeptide reads, in one-letter code: Histidine--tRNA ligase (424 aa).

The protein belongs to the class-II aminoacyl-tRNA synthetase family. As to quaternary structure, homodimer.

Its subcellular location is the cytoplasm. It catalyses the reaction tRNA(His) + L-histidine + ATP = L-histidyl-tRNA(His) + AMP + diphosphate + H(+). The chain is Histidine--tRNA ligase from Escherichia coli O127:H6 (strain E2348/69 / EPEC).